Consider the following 95-residue polypeptide: Aspartyl/glutamyl-tRNA(Asn/Gln) amidotransferase subunit C (95 aa).

This sequence belongs to the GatC family. As to quaternary structure, heterotrimer of A, B and C subunits.

It catalyses the reaction L-glutamyl-tRNA(Gln) + L-glutamine + ATP + H2O = L-glutaminyl-tRNA(Gln) + L-glutamate + ADP + phosphate + H(+). The catalysed reaction is L-aspartyl-tRNA(Asn) + L-glutamine + ATP + H2O = L-asparaginyl-tRNA(Asn) + L-glutamate + ADP + phosphate + 2 H(+). Allows the formation of correctly charged Asn-tRNA(Asn) or Gln-tRNA(Gln) through the transamidation of misacylated Asp-tRNA(Asn) or Glu-tRNA(Gln) in organisms which lack either or both of asparaginyl-tRNA or glutaminyl-tRNA synthetases. The reaction takes place in the presence of glutamine and ATP through an activated phospho-Asp-tRNA(Asn) or phospho-Glu-tRNA(Gln). The sequence is that of Aspartyl/glutamyl-tRNA(Asn/Gln) amidotransferase subunit C from Desulfosudis oleivorans (strain DSM 6200 / JCM 39069 / Hxd3) (Desulfococcus oleovorans).